Here is a 283-residue protein sequence, read N- to C-terminus: Nucleotide-binding protein THEYE_A0235 (283 aa).

Gly-12–Thr-19 is a binding site for ATP. Asp-62–Val-65 provides a ligand contact to GTP.

The protein belongs to the RapZ-like family.

In terms of biological role, displays ATPase and GTPase activities. In Thermodesulfovibrio yellowstonii (strain ATCC 51303 / DSM 11347 / YP87), this protein is Nucleotide-binding protein THEYE_A0235.